The primary structure comprises 1580 residues: Transcriptional activator GLI3 (1580 aa).

Methionine 1 carries the post-translational modification N-acetylmethionine. Polar residues-rich tracts occupy residues methionine 1 to threonine 10 and isoleucine 58 to serine 78. Residues methionine 1–serine 79 form a disordered region. Arginine 175 is subject to Omega-N-methylarginine. The interval glutamine 368 to glutamate 475 is disordered. The span at asparagine 401–glycine 427 shows a compositional bias: polar residues. Glycyl lysine isopeptide (Lys-Gly) (interchain with G-Cter in SUMO2) cross-links involve residues lysine 438 and lysine 462. Over residues valine 461–proline 474 the composition is skewed to basic and acidic residues. C2H2-type zinc fingers lie at residues threonine 480–histidine 505, phenylalanine 513–histidine 540, histidine 546–histidine 570, tyrosine 576–histidine 601, and tyrosine 607–histidine 632. The segment at aspartate 620–leucine 728 is disordered. Residues histidine 632–proline 648 are compositionally biased toward basic and acidic residues. Position 664 is a phosphoserine (serine 664). A compositionally biased stretch (basic and acidic residues) spans serine 684–lysine 699. A compositionally biased stretch (low complexity) spans serine 703 to serine 726. Residues aspartate 745–asparagine 845 form a mediates interaction with DZIP1 region. Residue lysine 773 forms a Glycyl lysine isopeptide (Lys-Gly) (interchain with G-Cter in ubiquitin) linkage. Residue lysine 779 forms a Glycyl lysine isopeptide (Lys-Gly) (interchain with G-Cter in SUMO2); alternate linkage. A Glycyl lysine isopeptide (Lys-Gly) (interchain with G-Cter in ubiquitin); alternate cross-link involves residue lysine 779. Residues lysine 784 and lysine 800 each participate in a glycyl lysine isopeptide (Lys-Gly) (interchain with G-Cter in ubiquitin) cross-link. A phosphoserine; by PKA mark is found at serine 849, serine 865, serine 877, and serine 907. Over residues arginine 863–alanine 882 the composition is skewed to low complexity. The segment at arginine 863 to leucine 918 is disordered. Positions glutamate 908–leucine 918 are enriched in polar residues. Residues serine 980 and serine 1006 each carry the phosphoserine; by PKA modification. Residues aspartate 981 to arginine 1042 form a disordered region.

It belongs to the GLI C2H2-type zinc-finger protein family. As to quaternary structure, the full-length GLI3 form (GLI3FL) interacts with SUFU and this interaction regulates the formation of either repressor or activator forms of GLI3. Its association with SUFU is regulated by Hh signaling and dissociation of the SUFU-GLI3 interaction requires the presence of the ciliary motor KIF3A. Interacts with KIF7. The activator form of GLI3 (GLI3A) but not the repressor form (GLI3R) can interact with TRPS1. The phosphorylated form interacts with BTRC. Interacts with ZIC1. Interacts with ZIC3 (via C2H2-type domains 3, 4 and 5); the interaction enhances its transcriptional activity. Interacts with WRD11; the interaction associates EMX1 with GLI3. Interacts with DZIP1; retains GLI3 within the cytoplasm. In terms of processing, phosphorylated on multiple sites by protein kinase A (PKA) and phosphorylation by PKA primes further phosphorylation by CK1 and GSK3. Phosphorylated by DYRK2 (in vitro). Phosphorylation is essential for its proteolytic processing. Post-translationally, transcriptional repressor GLI3R, a C-terminally truncated form, is generated from the full-length GLI3 protein (GLI3FL/GLI3-190) through proteolytic processing. This process requires PKA-primed phosphorylation of GLI3, ubiquitination of GLI3 and the presence of BTRC. GLI3FL is complexed with SUFU in the cytoplasm and is maintained in a neutral state. Without the Hh signal, the SUFU-GLI3 complex is recruited to cilia, leading to the efficient processing of GLI3FL into GLI3R. GLI3R formation leads to its dissociation from SUFU, allowing it to translocate into the nucleus, and repress Hh target genes. When Hh signaling is initiated, SUFU dissociates from GLI3FL and this has two consequences. First, GLI3R production is halted. Second, free GLI3FL translocates to the nucleus, where it is phosphorylated, destabilized, and converted to a transcriptional activator (GLI3A). Phosphorylated in vitro by ULK3.

It localises to the nucleus. The protein localises to the cytoplasm. It is found in the cell projection. Its subcellular location is the cilium. Has a dual function as a transcriptional activator and a repressor of the sonic hedgehog (Shh) pathway, and plays a role in limb development. The full-length GLI3 form (GLI3FL) after phosphorylation and nuclear translocation, acts as an activator (GLI3A) while GLI3R, its C-terminally truncated form, acts as a repressor. A proper balance between the GLI3 activator and the repressor GLI3R, rather than the repressor gradient itself or the activator/repressor ratio gradient, specifies limb digit number and identity. In concert with TRPS1, plays a role in regulating the size of the zone of distal chondrocytes, in restricting the zone of PTHLH expression in distal cells and in activating chondrocyte proliferation. Binds to the minimal GLI-consensus sequence 5'-GGGTGGTC-3'. Plays a role in limb and brain development. The chain is Transcriptional activator GLI3 (GLI3) from Pan troglodytes (Chimpanzee).